Here is a 156-residue protein sequence, read N- to C-terminus: Small ribosomal subunit protein uS7 (156 aa).

It belongs to the universal ribosomal protein uS7 family. As to quaternary structure, part of the 30S ribosomal subunit. Contacts proteins S9 and S11.

In terms of biological role, one of the primary rRNA binding proteins, it binds directly to 16S rRNA where it nucleates assembly of the head domain of the 30S subunit. Is located at the subunit interface close to the decoding center, probably blocks exit of the E-site tRNA. This chain is Small ribosomal subunit protein uS7, found in Lachnospira eligens (strain ATCC 27750 / DSM 3376 / VPI C15-48 / C15-B4) (Eubacterium eligens).